The primary structure comprises 182 residues: Transcription termination/antitermination protein NusG (182 aa).

Positions 131–163 constitute a KOW domain; the sequence is VGEQVRIQSGPFANQIGEVQEIEADKFKLTVLV.

This sequence belongs to the NusG family.

In terms of biological role, participates in transcription elongation, termination and antitermination. This chain is Transcription termination/antitermination protein NusG, found in Staphylococcus epidermidis (strain ATCC 35984 / DSM 28319 / BCRC 17069 / CCUG 31568 / BM 3577 / RP62A).